Consider the following 224-residue polypeptide: Small ribosomal subunit protein uS13 (224 aa).

The span at 1-17 shows a compositional bias: basic and acidic residues; the sequence is MSEKTDKTEKKQKKAEE. Disordered regions lie at residues 1–64 and 184–224; these read MSEK…AEEK and HERG…EDKK. Composition is skewed to low complexity over residues 20 to 30 and 38 to 47; these read ETASAEAAPAK and AKPAEGAPAD. A compositionally biased stretch (basic and acidic residues) spans 210-224; that stretch reads KKGEQGGAAKKEDKK.

The protein belongs to the universal ribosomal protein uS13 family. In terms of assembly, part of the 30S ribosomal subunit. Forms a loose heterodimer with protein S19. Forms two bridges to the 50S subunit in the 70S ribosome.

Its function is as follows. Located at the top of the head of the 30S subunit, it contacts several helices of the 16S rRNA. In the 70S ribosome it contacts the 23S rRNA (bridge B1a) and protein L5 of the 50S subunit (bridge B1b), connecting the 2 subunits; these bridges are implicated in subunit movement. The sequence is that of Small ribosomal subunit protein uS13 from Methanocella arvoryzae (strain DSM 22066 / NBRC 105507 / MRE50).